We begin with the raw amino-acid sequence, 317 residues long: DNA-directed RNA polymerase subunit alpha (317 aa).

Residues M1–N234 form an alpha N-terminal domain (alpha-NTD) region. Positions D250–S317 are alpha C-terminal domain (alpha-CTD).

It belongs to the RNA polymerase alpha chain family. Homodimer. The RNAP catalytic core consists of 2 alpha, 1 beta, 1 beta' and 1 omega subunit. When a sigma factor is associated with the core the holoenzyme is formed, which can initiate transcription.

The enzyme catalyses RNA(n) + a ribonucleoside 5'-triphosphate = RNA(n+1) + diphosphate. In terms of biological role, DNA-dependent RNA polymerase catalyzes the transcription of DNA into RNA using the four ribonucleoside triphosphates as substrates. The chain is DNA-directed RNA polymerase subunit alpha from Mycoplasma mycoides subsp. mycoides SC (strain CCUG 32753 / NCTC 10114 / PG1).